The sequence spans 378 residues: Ribosomal RNA large subunit methyltransferase G (378 aa).

Belongs to the methyltransferase superfamily. RlmG family.

It is found in the cytoplasm. It catalyses the reaction guanosine(1835) in 23S rRNA + S-adenosyl-L-methionine = N(2)-methylguanosine(1835) in 23S rRNA + S-adenosyl-L-homocysteine + H(+). Functionally, specifically methylates the guanine in position 1835 (m2G1835) of 23S rRNA. This Enterobacter sp. (strain 638) protein is Ribosomal RNA large subunit methyltransferase G.